The following is a 169-amino-acid chain: UPF0316 protein Dde_2502 (169 aa).

3 helical membrane-spanning segments follow: residues 1–21 (MITA…LCDV), 38–58 (LAFS…SRVI), and 68–88 (LAFA…EGVF).

The protein belongs to the UPF0316 family.

It localises to the cell membrane. The chain is UPF0316 protein Dde_2502 from Oleidesulfovibrio alaskensis (strain ATCC BAA-1058 / DSM 17464 / G20) (Desulfovibrio alaskensis).